Consider the following 1514-residue polypeptide: ABC transporter C family member 5 (1514 aa).

10 helical membrane-spanning segments follow: residues 16-36 (LLEL…LFAV), 76-96 (FGFN…VLVL), 111-131 (FVLC…FLVL), 142-162 (PFLV…TMYV), 177-197 (SHVV…FLAW), 312-332 (VFAG…SYFV), 334-354 (YLGG…IFFT), 421-441 (WYLH…AILY), 446-466 (IAAV…IPLA), and 533-553 (FIFW…SIFL). Residues 307–588 (AACNAVFAGL…FPDLVSMMAQ (282 aa)) form the ABC transmembrane type-1 1 domain. An ABC transporter 1 domain is found at 622–845 (IEIKDGVFCW…GTDFKALVSA (224 aa)). 657 to 664 (GTVGSGKS) provides a ligand contact to ATP. Residues 899–927 (ASDLKAIKEKKKKAKRSRKKQLVQEEERV) are a coiled coil. 6 consecutive transmembrane segments (helical) span residues 946–966 (GALI…QIAS), 986–1006 (PTLL…FIFV), 1078–1098 (IVAV…PVAV), 1117–1137 (IVSI…AGAA), 1155–1175 (LLDC…WLCL), and 1180–1200 (LSTL…HGTI). One can recognise an ABC transmembrane type-1 2 domain in the interval 949 to 1231 (IPLIILAQAA…WILSFCKLEN (283 aa)). Residues 1268-1502 (IELVDVKVRY…KSSMFLKLVT (235 aa)) form the ABC transporter 2 domain. Position 1302–1309 (1302–1309 (GRTGSGKS)) interacts with ATP.

It belongs to the ABC transporter superfamily. ABCC family. Conjugate transporter (TC 3.A.1.208) subfamily. Ubiquitous, mostly in vascular tissues and epidermis, including guard cells.

The protein localises to the membrane. The catalysed reaction is ATP + H2O + xenobioticSide 1 = ADP + phosphate + xenobioticSide 2.. With respect to regulation, (E(2)17G) transport activity in negatively regulated by organic anions such as oestradiol-3-sulfate, luteolin-7-O-diglucuronide-4'-O-glucuronide, glycocholate, vanadate and the sulfonylurea glibenclamide, and, to a lower extent, by bafilomycin A1, NH(4)Cl, GSH, GSSG and DNB-GS. In terms of biological role, pump for glutathione S-conjugates. Involved in regulation of K(+) and Na(+) cell content. Mediates resistance to NaCl and Li(+), confers sensitivity to sulfonylurea drugs such as glibenclamide (inducer of stomatal opening), and required for stomatal opening regulation by auxin, abscisic acid (ABA) and external Ca(2+). Transports oestradiol-17-(beta-D-glucuronide) (E(2)17G). Involved in the root auxin content regulation that controls the transition from primary root elongation to lateral root formation. Plays a role in ABA-mediated germination inhibition. High-affinity inositol hexakisphosphate transporter that plays a role in guard cell signaling and phytic acid storage. Required for phytic acid accumulation in developing seeds. Phytic acid is the primary storage form of phosphorus in cereal grains and other plant seeds. This chain is ABC transporter C family member 5 (ABCC5), found in Arabidopsis thaliana (Mouse-ear cress).